The primary structure comprises 316 residues: Nucleotide-binding protein Sala_2050 (316 aa).

An ATP-binding site is contributed by 18 to 25 (GLSGAGKS). A GTP-binding site is contributed by 69-72 (DSRS). The interval 283 to 316 (GYEPTLTHRNLDSAPQDGLEGKPPSAARASGGAR) is disordered.

Belongs to the RapZ-like family.

In terms of biological role, displays ATPase and GTPase activities. The polypeptide is Nucleotide-binding protein Sala_2050 (Sphingopyxis alaskensis (strain DSM 13593 / LMG 18877 / RB2256) (Sphingomonas alaskensis)).